We begin with the raw amino-acid sequence, 210 residues long: ATP phosphoribosyltransferase (210 aa).

This sequence belongs to the ATP phosphoribosyltransferase family. Short subfamily. As to quaternary structure, heteromultimer composed of HisG and HisZ subunits.

The protein localises to the cytoplasm. The catalysed reaction is 1-(5-phospho-beta-D-ribosyl)-ATP + diphosphate = 5-phospho-alpha-D-ribose 1-diphosphate + ATP. Its pathway is amino-acid biosynthesis; L-histidine biosynthesis; L-histidine from 5-phospho-alpha-D-ribose 1-diphosphate: step 1/9. Catalyzes the condensation of ATP and 5-phosphoribose 1-diphosphate to form N'-(5'-phosphoribosyl)-ATP (PR-ATP). Has a crucial role in the pathway because the rate of histidine biosynthesis seems to be controlled primarily by regulation of HisG enzymatic activity. The sequence is that of ATP phosphoribosyltransferase (hisG) from Synechocystis sp. (strain ATCC 27184 / PCC 6803 / Kazusa).